A 148-amino-acid polypeptide reads, in one-letter code: Hemoglobin subunit beta (148 aa).

Residues 3–148 (DWTDAERSAI…VVSALGRQYH (146 aa)) form the Globin domain. Heme b is bound by residues H64 and H93.

Belongs to the globin family. In terms of assembly, heterotetramer of two alpha chains and two beta chains. In terms of tissue distribution, red blood cells.

Its function is as follows. Involved in oxygen transport from gills to the various peripheral tissues. In Oncorhynchus nerka (Sockeye salmon), this protein is Hemoglobin subunit beta (hbb).